We begin with the raw amino-acid sequence, 780 residues long: ATP-dependent 6-phosphofructokinase, muscle type (780 aa).

N-acetylthreonine is present on Thr2. The interval Thr2 to His390 is N-terminal catalytic PFK domain 1. Residues Gly25, Arg88–Cys89, and Gly118–Ser121 contribute to the ATP site. Asp119 serves as a coordination point for Mg(2+). Ser133 bears the Phosphoserine mark. Residues Ser164 to Asp166, Arg201, Met208 to Arg210, Glu264, Arg292, and His298 to Arg301 contribute to the substrate site. Asp166 acts as the Proton acceptor in catalysis. Position 377 is a phosphoserine (Ser377). The segment at Val391–His401 is interdomain linker. A C-terminal regulatory PFK domain 2 region spans residues Thr402–Val780. Residues Arg471 and Thr528 to Asn532 contribute to the beta-D-fructose 2,6-bisphosphate site. Ser530 carries an O-linked (GlcNAc) serine glycan. Lys557 carries the N6-(2-hydroxyisobutyryl)lysine modification. Beta-D-fructose 2,6-bisphosphate contacts are provided by residues Arg566, Met573–Gly575, Glu629, Arg655, and His661–Gln664. Position 667 is a phosphoserine (Ser667). Position 735 (Arg735) interacts with beta-D-fructose 2,6-bisphosphate. The residue at position 775 (Ser775) is a Phosphoserine.

It belongs to the phosphofructokinase type A (PFKA) family. ATP-dependent PFK group I subfamily. Eukaryotic two domain clade 'E' sub-subfamily. Homo- and heterotetramers. Phosphofructokinase (PFK) enzyme functions as a tetramer composed of different combinations of 3 types of subunits, called PFKM (M), PFKL (L) and PFKP (P). The composition of the PFK tetramer differs according to the tissue type it is present in. The kinetic and regulatory properties of the tetrameric enzyme are dependent on the subunit composition, hence can vary across tissues. Isoform 2 and isoform 3 interact (via N-terminal testis-specific region) with GSTM5. Isoform 2 and isoform 3 interact (via C-terminus) with HK1 (via N-terminal spermatogenic cell-specific region). The cofactor is Mg(2+). In terms of processing, glcNAcylation decreases enzyme activity. As to expression, isoform 1 is expressed in skeletal muscle (at protein level). Isoform 2 and isoform 3 are testis-specific and are detected in quiescent sperm (at protein level). They are first detected in the cytoplasm of round spermatids and subsequently in the flagellum of elongated spermatids extending into the seminiferous tubule lumen (at protein level). Isoform 2 is expressed at higher level than isoform 3 in testis.

Its subcellular location is the cytoplasm. It is found in the cell projection. The protein localises to the cilium. It localises to the flagellum. The catalysed reaction is beta-D-fructose 6-phosphate + ATP = beta-D-fructose 1,6-bisphosphate + ADP + H(+). The protein operates within carbohydrate degradation; glycolysis; D-glyceraldehyde 3-phosphate and glycerone phosphate from D-glucose: step 3/4. Allosterically activated by ADP, AMP, or fructose 2,6-bisphosphate, and allosterically inhibited by ATP or citrate. Functionally, catalyzes the phosphorylation of D-fructose 6-phosphate to fructose 1,6-bisphosphate by ATP, the first committing step of glycolysis. The sequence is that of ATP-dependent 6-phosphofructokinase, muscle type (Pfkm) from Mus musculus (Mouse).